A 469-amino-acid chain; its full sequence is Trigger factor (469 aa).

A PPIase FKBP-type domain is found at 162-243 (GDFVSIDLSA…VKSVKERELP (82 aa)). A disordered region spans residues 438 to 469 (GPSGEQAAEDSAEESTDAAEGEAAEDADDTDK). Over residues 444 to 469 (AAEDSAEESTDAAEGEAAEDADDTDK) the composition is skewed to acidic residues.

The protein belongs to the FKBP-type PPIase family. Tig subfamily.

It is found in the cytoplasm. The catalysed reaction is [protein]-peptidylproline (omega=180) = [protein]-peptidylproline (omega=0). In terms of biological role, involved in protein export. Acts as a chaperone by maintaining the newly synthesized protein in an open conformation. Functions as a peptidyl-prolyl cis-trans isomerase. The protein is Trigger factor of Mycolicibacterium smegmatis (strain ATCC 700084 / mc(2)155) (Mycobacterium smegmatis).